We begin with the raw amino-acid sequence, 355 residues long: 4-dimethylallyltryptophan N-methyltransferase easF (355 aa).

Belongs to the methyltransferase superfamily. Homodimer.

The enzyme catalyses 4-(3-methylbut-2-enyl)-L-tryptophan + S-adenosyl-L-methionine = 4-(3-methylbut-2-enyl)-L-abrine + S-adenosyl-L-homocysteine + H(+). Its pathway is alkaloid biosynthesis; ergot alkaloid biosynthesis. 4-dimethylallyltryptophan N-methyltransferase; part of the gene cluster that mediates the biosynthesis of fungal ergot alkaloid. DmaW catalyzes the first step of ergot alkaloid biosynthesis by condensing dimethylallyl diphosphate (DMAP) and tryptophan to form 4-dimethylallyl-L-tryptophan. The second step is catalyzed by the methyltransferase easF that methylates 4-dimethylallyl-L-tryptophan in the presence of S-adenosyl-L-methionine, resulting in the formation of 4-dimethylallyl-L-abrine. The catalase easC and the FAD-dependent oxidoreductase easE then transform 4-dimethylallyl-L-abrine to chanoclavine-I which is further oxidized by easD in the presence of NAD(+), resulting in the formation of chanoclavine-I aldehyde. Agroclavine dehydrogenase easG then mediates the conversion of chanoclavine-I aldehyde to agroclavine via a non-enzymatic adduct reaction: the substrate is an iminium intermediate that is formed spontaneously from chanoclavine-I aldehyde in the presence of glutathione. Further conversion of agroclavine to paspalic acid is a two-step process involving oxidation of agroclavine to elymoclavine and of elymoclavine to paspalic acid, the second step being performed by the elymoclavine oxidase cloA. However, cloA does not encode a functional enzyme indicating that C.fusiformis terminates its ergot alkaloid pathway at elymoclavine. This chain is 4-dimethylallyltryptophan N-methyltransferase easF, found in Claviceps fusiformis (Ergot fungus).